The sequence spans 802 residues: Oligophrenin-1 (802 aa).

The PH domain occupies 265-368 (QPTIEGYLYT…WMEAMDGKEP (104 aa)). The region spanning 380–564 (MELNEVGFKF…ILIEHFGKIY (185 aa)) is the Rho-GAP domain. Disordered stretches follow at residues 606-665 (SLDE…SEPC) and 681-802 (GTKA…GDES). The segment covering 617 to 627 (QTPNGTITSNL) has biased composition (polar residues). Residues 716 to 732 (HHKEGDTDGFSKVRPPG) show a composition bias toward basic and acidic residues.

In terms of assembly, interacts with HOMER1. Interacts with AMPA receptor complexes. Interacts with SH3GL2 (endophilin-A1). Interacts (via C-terminus) with NR1D1.

The protein resides in the postsynapse. Its subcellular location is the presynapse. The protein localises to the cell projection. It is found in the axon. It localises to the dendritic spine. The protein resides in the dendrite. Its subcellular location is the cytoplasm. Functionally, stimulates GTP hydrolysis of members of the Rho family. Its action on RHOA activity and signaling is implicated in growth and stabilization of dendritic spines, and therefore in synaptic function. Critical for the stabilization of AMPA receptors at postsynaptic sites. Critical for the regulation of synaptic vesicle endocytosis at presynaptic terminals. Required for the localization of NR1D1 to dendrites, can suppress its repressor activity and protect it from proteasomal degradation. The polypeptide is Oligophrenin-1 (Ophn1) (Mus musculus (Mouse)).